The chain runs to 353 residues: MERPAAGEIDANKCDHLSRGEEGTGDLETSPVGSLADLPFAAVDIQDDCGLPDVPQGNVPQGNPKRSKENRGDRNDHVKKRKKAKKDYQPNYFLSIPITNKKITAGIKVLQNSILRQDNRLTKAMVGDGSFHITLLVMQLLNEDEVNIGTDALLELKPFVEEILEGKHLTLPFHGIGTFQGQVGFVKLADGDHVSALLEIAETAKRTFQEKGILAGESRTFKPHLTFMKLSKAPMLWKKGVRKIEPGLYEQFIDHRFGEEILYQIDLCSMLKKKQSNGYYHCESSIVIGEKDRKEPEDAELVRLSKRLVENAVLKAVQQYLEETQNKKQPGEGNSVKAEEGDRNGDGSDNNRK.

Composition is skewed to basic and acidic residues over residues 1 to 22 (MERP…RGEE) and 66 to 76 (RSKENRGDRND). Disordered regions lie at residues 1-33 (MERP…SPVG) and 47-85 (DDCG…KKAK). Residues Thr-134 and 224–226 (HLT) contribute to the AMP site. Residues Thr-134 and 224–226 (HLT) contribute to the CMP site. Residues 299 to 353 (AELVRLSKRLVENAVLKAVQQYLEETQNKKQPGEGNSVKAEEGDRNGDGSDNNRK) form a PKA-RII-alpha subunit binding domain region. Residues 300–324 (ELVRLSKRLVENAVLKAVQQYLEET) form an RI-alpha-binding region. The RII-binding stretch occupies residues 301-314 (LVRLSKRLVENAVL). The disordered stretch occupies residues 321 to 353 (LEETQNKKQPGEGNSVKAEEGDRNGDGSDNNRK). Basic and acidic residues predominate over residues 337-353 (KAEEGDRNGDGSDNNRK).

Binds cAMP-dependent protein kinase (PKA). Interacts with PRKCA; only the cytoplasmic form is capable of interacting with PRKCA. In terms of tissue distribution, expressed highly in the heart, and moderately in brain, lung, liver, kidney and testis. Hardly detectable in spleen and skeletal muscle. In kidney, isoform Delta is expressed in the principal cells of the IMCD.

Its subcellular location is the nucleus. It is found in the cytoplasm. The protein resides in the cell membrane. Probably targets cAMP-dependent protein kinase (PKA) to the cellular membrane or cytoskeletal structures. The membrane-associated form reduces epithelial sodium channel (ENaC) activity, whereas the free cytoplasmic form may negatively regulate ENaC channel feedback inhibition by intracellular sodium. Isoform Delta may be involved in shuttling aquaporin-2 (AQP2) to the plasma membrane. In Rattus norvegicus (Rat), this protein is A-kinase anchor protein 7 isoforms delta and gamma.